Here is a 68-residue protein sequence, read N- to C-terminus: Protein transport protein Sec61 subunit gamma (68 aa).

At 1–32 the chain is on the cytoplasmic side; it reads MDQFQALIEPARQFSKDSYRLVKRCTKPDRKE. Residues 33 to 61 traverse the membrane as a helical segment; it reads YQKIAMATAIGFAIMGFIGFFVKLIHIPI. Residues 62–68 are Extracellular-facing; that stretch reads NNIIVGA.

This sequence belongs to the SecE/SEC61-gamma family. In terms of assembly, heterotrimeric complex composed of SEC61-alpha, SEC61-beta and SEC61-gamma. In terms of tissue distribution, expressed in the germline. Expression in the germline is regulated in a sex- and meiotic cycle stage-specific manner. Expressed in somatic tissues including the intestine and somatic gonad. Expressed in the intestine more highly in hermaprodites than in males. In hermaphrodites, weakly expressed in the spermatheca.

The protein localises to the endoplasmic reticulum membrane. Required for oocyte development and ovulation. Required for the translocation of secretory and transmembrane proteins into the endoplasmic reticulum in vitro. The sequence is that of Protein transport protein Sec61 subunit gamma from Caenorhabditis elegans.